The chain runs to 698 residues: Probable threonine--tRNA ligase 2, cytoplasmic (698 aa).

In terms of domain architecture, TGS spans 38–100; the sequence is GGGNIKLNDG…EMSGKDYNIE (63 aa). The segment at 541 to 560 is disordered; the sequence is NNNNNNNNNNEEINDNNNNN.

The protein belongs to the class-II aminoacyl-tRNA synthetase family.

Its subcellular location is the cytoplasm. The catalysed reaction is tRNA(Thr) + L-threonine + ATP = L-threonyl-tRNA(Thr) + AMP + diphosphate + H(+). This is Probable threonine--tRNA ligase 2, cytoplasmic (thrS2) from Dictyostelium discoideum (Social amoeba).